Reading from the N-terminus, the 648-residue chain is S-M checkpoint control protein rad4 (648 aa).

2 consecutive BRCT domains span residues 2 to 92 (GSSK…DDGL) and 96 to 185 (KHFL…YFQL). The short motif at 242-249 (KRGKKRDR) is the Nuclear localization signal element. 2 consecutive BRCT domains span residues 298 to 384 (NEAK…EHAL) and 392 to 486 (SLVP…SPWA). S592 carries the phosphoserine modification. Residues 643-648 (RKLRRR) carry the Nuclear localization signal motif.

In terms of assembly, interacts with drc1/sld2. Interacts (via BRCT1,2 domains) with crb2; a single rad4 molecule interacts simultaneously with both 'Thr-187' phosphorylation sites in a crb2 dimer.

Its subcellular location is the nucleus. Functionally, essential component for DNA replication and also the checkpoint control system which couples S and M phases. May directly or indirectly interact with chromatin proteins to form the complex required for the initiation and/or progression of DNA synthesis. Interacts simultaneously with both 'Thr-187' phosphorylation sites in a crb2 dimer for establishing the DNA checkpoint. The chain is S-M checkpoint control protein rad4 (rad4) from Schizosaccharomyces pombe (strain 972 / ATCC 24843) (Fission yeast).